The chain runs to 425 residues: Succinate--CoA ligase [ADP-forming] subunit beta, mitochondrial (425 aa).

The transit peptide at 1 to 14 (NNHGLQIQQQQQRN) directs the protein to the mitochondrion. An ATP-grasp domain is found at 23–250 (MELLQEAGVS…SNSAYRQKKI (228 aa)). Lys-40 bears the N6-acetyllysine mark. Tyr-46 bears the Phosphotyrosine mark. Residue Lys-50 is modified to N6-acetyllysine; alternate. The residue at position 50 (Lys-50) is an N6-succinyllysine; alternate. Residues Lys-60 and 67-69 (GRG) contribute to the ATP site. Residues Lys-91, Lys-101, Lys-105, and Lys-178 each carry the N6-acetyllysine modification. Mg(2+) contacts are provided by Asn-220 and Asp-234. Ser-241 is modified (phosphoserine). Asn-285 lines the substrate pocket. Phosphothreonine is present on Thr-303. Residue Lys-330 is modified to N6-acetyllysine. 342–344 (GIM) contributes to the substrate binding site. At Lys-400 the chain carries N6-acetyllysine.

This sequence belongs to the succinate/malate CoA ligase beta subunit family. ATP-specific subunit beta subfamily. As to quaternary structure, heterodimer of an alpha and a beta subunit. The beta subunit determines specificity for ATP. Interacts with ALAS2. Requires Mg(2+) as cofactor.

It localises to the mitochondrion. It catalyses the reaction succinate + ATP + CoA = succinyl-CoA + ADP + phosphate. The protein operates within carbohydrate metabolism; tricarboxylic acid cycle; succinate from succinyl-CoA (ligase route): step 1/1. Functionally, ATP-specific succinyl-CoA synthetase functions in the citric acid cycle (TCA), coupling the hydrolysis of succinyl-CoA to the synthesis of ATP and thus represents the only step of substrate-level phosphorylation in the TCA. The beta subunit provides nucleotide specificity of the enzyme and binds the substrate succinate, while the binding sites for coenzyme A and phosphate are found in the alpha subunit. The protein is Succinate--CoA ligase [ADP-forming] subunit beta, mitochondrial of Sus scrofa (Pig).